A 584-amino-acid chain; its full sequence is Transcriptional regulator STP2 (584 aa).

2 stretches are compositionally biased toward polar residues: residues 1-11 (MSVAITSNNNK) and 180-202 (AESN…SISD). Disordered stretches follow at residues 1–22 (MSVA…PHLK) and 161–214 (KMHP…STVS). A compositionally biased stretch (low complexity) spans 203–214 (SPSHSETESTVS). A C2H2-type zinc finger spans residues 225-247 (FKCPSCDAEFRVRGYLTRHMKKH). 2 disordered regions span residues 381 to 496 (RQKK…PQQP) and 553 to 584 (QYQP…SMYF). Low complexity predominate over residues 394–407 (SESSIQSQESESSI). The segment covering 431–441 (QHQHQHHHHVQ) has biased composition (basic residues). A compositionally biased stretch (low complexity) spans 442-480 (NQHQQHVNQQQSIATPASIYSSSASSTSSYESTHSPYTP). Polar residues predominate over residues 481–496 (QSSRSPLSHMYNPQQP).

Proteolytically cleaved: activated by the amino acid-induced proteolytic removal of an N-terminal inhibitory domain.

The protein localises to the cell membrane. Its subcellular location is the nucleus. In terms of biological role, transcription factor involved in the regulation of gene expression in response to extracellular amino acid levels. Synthesized as latent cytoplasmic precursor, which, upon a signal initiated by the plasma membrane SPS amino acid sensor system (including CSY1 and CSH3), becomes proteolytically activated and relocates to the nucleus, where it induces the expression of SPS-sensor-regulated genes. Required for efficient alkalinization through the release of ammonia from the cells produced during the breakdown of amino acids, and subsequent switch to the hyphal form. This chain is Transcriptional regulator STP2 (STP2), found in Candida albicans (strain SC5314 / ATCC MYA-2876) (Yeast).